The following is a 264-amino-acid chain: MNQVTESAVQFDVVSLFPEMFRALTDWGITSRAVKQGRFGLRTWNPRDFTTDNYRTVDDRPYGGGPGMVMLARPLEAAIDAAKAAQAEQGIASTRVVMMSPQGAPLTHDRAVRMAQEPGVVVLCGRYEAIDQRLLDRCVDEEISLGDFVLSGGELPAMAMMDAVVRLLPGVLNDSLSAVQDSFADGLLDCPHYTRPEEYDGVRVPDVLLGGHHAEIERWRRQEALRNTLRKRPDLIVRARREKLLSRADEAWLANLAREAKDAS.

S-adenosyl-L-methionine contacts are provided by residues glycine 125 and 145–150; that span reads LGDFVL.

The protein belongs to the RNA methyltransferase TrmD family. In terms of assembly, homodimer.

The protein resides in the cytoplasm. It carries out the reaction guanosine(37) in tRNA + S-adenosyl-L-methionine = N(1)-methylguanosine(37) in tRNA + S-adenosyl-L-homocysteine + H(+). Specifically methylates guanosine-37 in various tRNAs. The sequence is that of tRNA (guanine-N(1)-)-methyltransferase from Burkholderia lata (strain ATCC 17760 / DSM 23089 / LMG 22485 / NCIMB 9086 / R18194 / 383).